A 137-amino-acid polypeptide reads, in one-letter code: Methylglyoxal synthase (137 aa).

Residues 1-137 enclose the MGS-like domain; the sequence is MNIALVAHDQ…EVRKSKSQRI (137 aa). Residues His8, Lys12, 34 to 37, and 54 to 55 contribute to the substrate site; these read TGTT and SG. The Proton donor/acceptor role is filled by Asp60. Position 87 (His87) interacts with substrate.

This sequence belongs to the methylglyoxal synthase family.

It carries out the reaction dihydroxyacetone phosphate = methylglyoxal + phosphate. In terms of biological role, catalyzes the formation of methylglyoxal from dihydroxyacetone phosphate. The chain is Methylglyoxal synthase from Clostridioides difficile (strain 630) (Peptoclostridium difficile).